Consider the following 101-residue polypeptide: Small ribosomal subunit protein uS14 (101 aa).

The segment at 1–21 (MAKVSLIKKNESRKKKSQSLH) is disordered. The segment covering 11–21 (ESRKKKSQSLH) has biased composition (basic residues).

The protein belongs to the universal ribosomal protein uS14 family. As to quaternary structure, part of the 30S ribosomal subunit. Contacts proteins S3 and S10.

Binds 16S rRNA, required for the assembly of 30S particles and may also be responsible for determining the conformation of the 16S rRNA at the A site. The protein is Small ribosomal subunit protein uS14 of Rickettsia canadensis (strain McKiel).